The primary structure comprises 368 residues: Phosphotransferase IIC component GlvC (368 aa).

Residues Met-1–Ala-11 are Periplasmic-facing. The PTS EIIC type-1 domain occupies Met-1–Asp-368. Residues Met-12–Leu-32 form a helical membrane-spanning segment. The Cytoplasmic segment spans residues Gln-33 to Gly-59. A helical membrane pass occupies residues Gly-60–Ala-80. At Lys-81–Arg-86 the chain is on the periplasmic side. A helical membrane pass occupies residues Ala-87–Met-107. The Cytoplasmic portion of the chain corresponds to Thr-108–Met-129. Residues Met-130–Val-150 form a helical membrane-spanning segment. The Periplasmic segment spans residues Thr-151–Ser-173. The helical transmembrane segment at Tyr-174 to Trp-194 threads the bilayer. Residues Pro-195 to Gln-198 lie on the Cytoplasmic side of the membrane. The helical transmembrane segment at Met-199–Phe-221 threads the bilayer. At Leu-222 to Arg-224 the chain is on the periplasmic side. Residues Ile-225 to Ala-245 traverse the membrane as a helical segment. The Cytoplasmic portion of the chain corresponds to Val-246–Gly-276. Residues Phe-277 to Phe-297 traverse the membrane as a helical segment. The Periplasmic segment spans residues Thr-298 to Lys-306. Residues Val-307–Leu-327 form a helical membrane-spanning segment. Residue Glu-328 is a topological domain, cytoplasmic. The helical transmembrane segment at Phe-329–Met-349 threads the bilayer. Residues Ser-350–Asp-368 are Periplasmic-facing.

The protein resides in the cell inner membrane. The phosphoenolpyruvate-dependent sugar phosphotransferase system (PTS), a major carbohydrate active -transport system, catalyzes the phosphorylation of incoming sugar substrates concomitant with their translocation across the cell membrane. This operon may be cryptic in wild-type K12 strains. This Escherichia coli (strain K12) protein is Phosphotransferase IIC component GlvC.